A 234-amino-acid chain; its full sequence is Inosine triphosphate pyrophosphatase (234 aa).

Ser-11–Lys-16 lines the ITP pocket. A Mg(2+)-binding site is contributed by Glu-40. Residues Lys-53, Asp-81 to Thr-82, Lys-98, Phe-176 to Asp-179, Lys-203, and His-208 to Arg-209 each bind ITP.

The protein belongs to the HAM1 NTPase family. As to quaternary structure, homodimer. It depends on Mg(2+) as a cofactor. Requires Mn(2+) as cofactor.

The protein resides in the cytoplasm. It carries out the reaction ITP + H2O = IMP + diphosphate + H(+). The catalysed reaction is dITP + H2O = dIMP + diphosphate + H(+). It catalyses the reaction XTP + H2O = XMP + diphosphate + H(+). In terms of biological role, pyrophosphatase that hydrolyzes non-canonical purine nucleotides such as inosine triphosphate (ITP), deoxyinosine triphosphate (dITP) or xanthosine 5'-triphosphate (XTP) to their respective monophosphate derivatives. The enzyme does not distinguish between the deoxy- and ribose forms. Probably excludes non-canonical purines from RNA and DNA precursor pools, thus preventing their incorporation into RNA and DNA and avoiding chromosomal lesions. The chain is Inosine triphosphate pyrophosphatase from Leishmania major.